Reading from the N-terminus, the 158-residue chain is Cathelicidin-6 (158 aa).

The signal sequence occupies residues 1–29 (METQRASLSLGRWSLWLLLLGLALPSASA). Positions 30-131 (QALSYREAVL…NVTCEELQSV (102 aa)) are excised as a propeptide. 2 cysteine pairs are disulfide-bonded: C86–C97 and C108–C125.

This sequence belongs to the cathelicidin family.

The protein resides in the secreted. Functionally, exerts a potent antimicrobial activity against Gram-negative and Gram-positive bacteria, including methicillin-resistant Staphylococcus aureus, and fungi. This is Cathelicidin-6 (CATHL6) from Bos taurus (Bovine).